The chain runs to 210 residues: N-(5'-phosphoribosyl)anthranilate isomerase (210 aa).

Belongs to the TrpF family.

It carries out the reaction N-(5-phospho-beta-D-ribosyl)anthranilate = 1-(2-carboxyphenylamino)-1-deoxy-D-ribulose 5-phosphate. It participates in amino-acid biosynthesis; L-tryptophan biosynthesis; L-tryptophan from chorismate: step 3/5. The protein is N-(5'-phosphoribosyl)anthranilate isomerase of Crocosphaera subtropica (strain ATCC 51142 / BH68) (Cyanothece sp. (strain ATCC 51142)).